We begin with the raw amino-acid sequence, 419 residues long: MRFVDYVSIEVVAGKGGDGIISFRREAHVDKGGPDGGDGGWGGSIYFVGDSGMNTLLPFYQTKKIFGYNGENGRPKRQTGANGKDIFIKVPLGTQVFLKKSLICDIILEKKYLIAKGGRGGLGNFHFRNSKNKAPRISENGELGQNFYLDLQLKVMADIGLVGKPNAGKSTLLSLISNSKPKIANYEFTTLVPQLGVVKIYENSFVTADLPGLIQGASSGKGMGIIFLKHIERCRAIVHVIDFGSDNKNPIKDFIEIKSELEKFNKKLLDLNQIVIANKCDLPNFQFNLANFKRKFPKIKIIKSSLISAKQNEINIIKEKMFGLLGENQKKLEIQEINTSKIEFNLKAPFLIKSRNNGFFEITGELIQKIIQKIPLNSQENILRFNAKVKKIGLWDELIKKGIKPGDLVRIYEFEFHWN.

The Obg domain maps to 1 to 156; the sequence is MRFVDYVSIE…FYLDLQLKVM (156 aa). In terms of domain architecture, OBG-type G spans 157 to 334; sequence ADIGLVGKPN…LGENQKKLEI (178 aa). GTP-binding positions include 163-170, 188-192, 209-212, 278-281, and 315-317; these read GKPNAGKS, FTTLV, DLPG, NKCD, and NII. Residues serine 170 and threonine 190 each coordinate Mg(2+). The OCT domain occupies 342–419; the sequence is IEFNLKAPFL…RIYEFEFHWN (78 aa).

The protein belongs to the TRAFAC class OBG-HflX-like GTPase superfamily. OBG GTPase family. As to quaternary structure, monomer. It depends on Mg(2+) as a cofactor.

The protein resides in the cytoplasm. An essential GTPase which binds GTP, GDP and possibly (p)ppGpp with moderate affinity, with high nucleotide exchange rates and a fairly low GTP hydrolysis rate. Plays a role in control of the cell cycle, stress response, ribosome biogenesis and in those bacteria that undergo differentiation, in morphogenesis control. The sequence is that of GTPase Obg from Mesomycoplasma hyopneumoniae (strain 7448) (Mycoplasma hyopneumoniae).